The sequence spans 846 residues: Aminopeptidase N (846 aa).

Substrate contacts are provided by residues glutamate 120 and 252 to 256; that span reads GAMEN. A Zn(2+)-binding site is contributed by histidine 288. Glutamate 289 functions as the Proton acceptor in the catalytic mechanism. Zn(2+)-binding residues include histidine 292 and glutamate 311.

This sequence belongs to the peptidase M1 family. As to quaternary structure, monomer. Zn(2+) serves as cofactor.

Its subcellular location is the cytoplasm. It catalyses the reaction Release of an N-terminal amino acid, Xaa-|-Yaa- from a peptide, amide or arylamide. Xaa is preferably Ala, but may be most amino acids including Pro (slow action). When a terminal hydrophobic residue is followed by a prolyl residue, the two may be released as an intact Xaa-Pro dipeptide.. Its function is as follows. Aminopeptidase with broad substrate specificity to several peptides. It has more affinity for oligopeptides than for dipeptides. It plays an essential role in the metabolism, it may be involved in nitrogen supply or protein turnover. The chain is Aminopeptidase N (pepN) from Lactococcus lactis subsp. lactis (strain IL1403) (Streptococcus lactis).